We begin with the raw amino-acid sequence, 382 residues long: Glutaminyl-peptide cyclotransferase-like protein (382 aa).

Residues 35–55 (LLPLLLALAVGSAFYTIWSGW) form a helical membrane-spanning segment. A disulfide bridge connects residues Cys-167 and Cys-191. A Zn(2+)-binding site is contributed by Asp-186. The active-site Proton acceptor is Glu-225. Glu-226 provides a ligand contact to Zn(2+). Asp-269 functions as the Proton acceptor in the catalytic mechanism. His-351 is a binding site for Zn(2+).

This sequence belongs to the glutaminyl-peptide cyclotransferase family.

The protein resides in the golgi apparatus membrane. It carries out the reaction N-terminal L-glutaminyl-[peptide] = N-terminal 5-oxo-L-prolyl-[peptide] + NH4(+). Its function is as follows. Responsible for the biosynthesis of pyroglutamyl peptides. The protein is Glutaminyl-peptide cyclotransferase-like protein (QPCTL) of Macaca fascicularis (Crab-eating macaque).